The chain runs to 251 residues: CDP-diacylglycerol pyrophosphatase (251 aa).

A helical transmembrane segment spans residues 5–25; the sequence is GYFLLAVIVIVAAAGVGYWKF.

Belongs to the Cdh family.

The protein resides in the cell inner membrane. It carries out the reaction a CDP-1,2-diacyl-sn-glycerol + H2O = a 1,2-diacyl-sn-glycero-3-phosphate + CMP + 2 H(+). The protein operates within phospholipid metabolism; CDP-diacylglycerol degradation; phosphatidate from CDP-diacylglycerol: step 1/1. In Salmonella enteritidis PT4 (strain P125109), this protein is CDP-diacylglycerol pyrophosphatase.